A 149-amino-acid chain; its full sequence is Transcriptional repressor NrdR (149 aa).

The segment at 3 to 34 (CPFCSATDTKVIDSRLVAEGHQVRRRRECTEC) is a zinc-finger region. The 91-residue stretch at 49–139 (PRVIKRDGTR…VYRAFEDVSE (91 aa)) folds into the ATP-cone domain.

Belongs to the NrdR family. The cofactor is Zn(2+).

Functionally, negatively regulates transcription of bacterial ribonucleotide reductase nrd genes and operons by binding to NrdR-boxes. The polypeptide is Transcriptional repressor NrdR (Shewanella sp. (strain MR-4)).